Reading from the N-terminus, the 328-residue chain is Putative lipase LIH1 (328 aa).

Residue Ser181 is the Nucleophile of the active site. Residues Asp253 and His315 each act as charge relay system in the active site.

The protein belongs to the AB hydrolase superfamily. Lipase family.

It carries out the reaction a triacylglycerol + H2O = a diacylglycerol + a fatty acid + H(+). Functionally, lipases catalyze the hydrolysis of the ester bond of tri-, di- and monoglycerides of long-chain fatty acids into fatty acids and glycerol. In Saccharomyces cerevisiae (strain ATCC 204508 / S288c) (Baker's yeast), this protein is Putative lipase LIH1.